A 145-amino-acid polypeptide reads, in one-letter code: Dihydrolipoyllysine-residue succinyltransferase component of 2-oxoglutarate dehydrogenase complex, mitochondrial (145 aa).

Residues 4 to 31 (ITVQTPAFAESVTEGDVRVEGGTPLFTL) enclose the Lipoyl-binding domain. Ser14 is subject to Phosphoserine. N6-acetyllysine occurs at positions 36 and 66. Active-site residues include His119 and Asp123.

The protein belongs to the 2-oxoacid dehydrogenase family. The 2-oxoglutarate dehydrogenase complex is composed of OGDH (2-oxoglutarate dehydrogenase; E1), DLST (dihydrolipoamide succinyltransferase; E2), DLD (dihydrolipoamide dehydrogenase; E3) and the assembly factor KGD4. It contains multiple copies of the three enzymatic components (E1, E2 and E3). In the nucleus, the 2-oxoglutarate dehydrogenase complex associates with KAT2A. Interacts with ABHD11; this interaction maintains the functional lipoylation of the 2-oxoglutarate dehydrogenase complex. (R)-lipoate serves as cofactor.

It localises to the mitochondrion matrix. The protein resides in the nucleus. It catalyses the reaction N(6)-[(R)-dihydrolipoyl]-L-lysyl-[protein] + succinyl-CoA = N(6)-[(R)-S(8)-succinyldihydrolipoyl]-L-lysyl-[protein] + CoA. Its pathway is amino-acid degradation; L-lysine degradation via saccharopine pathway; glutaryl-CoA from L-lysine: step 6/6. The protein operates within carbohydrate metabolism; tricarboxylic acid cycle. Functionally, dihydrolipoamide succinyltransferase (E2) component of the 2-oxoglutarate dehydrogenase complex. The 2-oxoglutarate dehydrogenase complex catalyzes the overall conversion of 2-oxoglutarate to succinyl-CoA and CO(2). The 2-oxoglutarate dehydrogenase complex is mainly active in the mitochondrion. A fraction of the 2-oxoglutarate dehydrogenase complex also localizes in the nucleus and is required for lysine succinylation of histones: associates with KAT2A on chromatin and provides succinyl-CoA to histone succinyltransferase KAT2A. In Mesocricetus auratus (Golden hamster), this protein is Dihydrolipoyllysine-residue succinyltransferase component of 2-oxoglutarate dehydrogenase complex, mitochondrial.